Reading from the N-terminus, the 612-residue chain is uncharacterized protein (612 aa).

The segment at residues 6–32 (CLYCRRRKIKCDKNRPCHNCFVAKREC) is a DNA-binding region (zn(2)-C6 fungal-type).

It localises to the cytoplasm. The protein localises to the nucleus. This is an uncharacterized protein from Schizosaccharomyces pombe (strain 972 / ATCC 24843) (Fission yeast).